Here is a 36-residue protein sequence, read N- to C-terminus: Photosystem I reaction center subunit VIII (36 aa).

The helical transmembrane segment at 9 to 29 threads the bilayer; sequence ILVPLVGLVFPAIAMASLFLY.

The protein belongs to the PsaI family.

It localises to the plastid. The protein localises to the chloroplast thylakoid membrane. May help in the organization of the PsaL subunit. The chain is Photosystem I reaction center subunit VIII from Oltmannsiellopsis viridis (Marine flagellate).